The primary structure comprises 211 residues: Uracil phosphoribosyltransferase (211 aa).

5-phospho-alpha-D-ribose 1-diphosphate-binding positions include arginine 78, arginine 103, and aspartate 130–threonine 138. Uracil is bound by residues isoleucine 196 and glycine 201–alanine 203. Residue aspartate 202 participates in 5-phospho-alpha-D-ribose 1-diphosphate binding.

It belongs to the UPRTase family. The cofactor is Mg(2+).

It carries out the reaction UMP + diphosphate = 5-phospho-alpha-D-ribose 1-diphosphate + uracil. The protein operates within pyrimidine metabolism; UMP biosynthesis via salvage pathway; UMP from uracil: step 1/1. With respect to regulation, allosterically activated by GTP. Catalyzes the conversion of uracil and 5-phospho-alpha-D-ribose 1-diphosphate (PRPP) to UMP and diphosphate. The chain is Uracil phosphoribosyltransferase from Beutenbergia cavernae (strain ATCC BAA-8 / DSM 12333 / CCUG 43141 / JCM 11478 / NBRC 16432 / NCIMB 13614 / HKI 0122).